Consider the following 168-residue polypeptide: uncharacterized protein (168 aa).

2 consecutive CBS domains span residues 20–77 and 117–168; these read IMKK…NEDL and MTRK…EALI.

This is an uncharacterized protein from Methanocaldococcus jannaschii (strain ATCC 43067 / DSM 2661 / JAL-1 / JCM 10045 / NBRC 100440) (Methanococcus jannaschii).